The chain runs to 367 residues: Ribosomal lysine N-methyltransferase 5 (367 aa).

The interval 55–74 is disordered; sequence EGGRKKKRVRRRNKASSVEE. Over residues 58-68 the composition is skewed to basic residues; it reads RKKKRVRRRNK. S-adenosyl-L-methionine contacts are provided by residues W110, 170-172, D192, W256, and M288; that span reads GAG.

The protein belongs to the class I-like SAM-binding methyltransferase superfamily. RKM5 family.

S-adenosyl-L-methionine-dependent protein-lysine N-methyltransferase that monomethylates 60S ribosomal protein L1 (RPL1A and RPL1B) at 'Lys-46'. This Saccharomyces cerevisiae (strain AWRI796) (Baker's yeast) protein is Ribosomal lysine N-methyltransferase 5 (RKM5).